A 197-amino-acid chain; its full sequence is Short chain dehydrogenase ausX (197 aa).

NADP(+) is bound by residues isoleucine 49, aspartate 95, arginine 157, and tyrosine 189. Tyrosine 189 functions as the Proton acceptor in the catalytic mechanism. Catalysis depends on tyrosine 189, which acts as the Proton donor.

Belongs to the short-chain dehydrogenases/reductases (SDR) family.

It functions in the pathway secondary metabolite biosynthesis; terpenoid biosynthesis. Its function is as follows. Short chain dehydrogenase; part of the gene cluster A that mediates the biosynthesis of austinol and dehydroaustinol, two fungal meroterpenoids. The first step of the pathway is the synthesis of 3,5-dimethylorsellinic acid by the polyketide synthase ausA. 3,5-dimethylorsellinic acid is then prenylated by the polyprenyl transferase ausN. Further epoxidation by the FAD-dependent monooxygenase ausM and cyclization by the probable terpene cyclase ausL lead to the formation of protoaustinoid A. Protoaustinoid A is then oxidized to spiro-lactone preaustinoid A3 by the combined action of the FAD-binding monooxygenases ausB and ausC, and the dioxygenase ausE. Acid-catalyzed keto-rearrangement and ring contraction of the tetraketide portion of preaustinoid A3 by ausJ lead to the formation of preaustinoid A4. The aldo-keto reductase ausK, with the help of ausH, is involved in the next step by transforming preaustinoid A4 into isoaustinone which is in turn hydroxylated by the P450 monooxygenase ausI to form austinolide. Finally, the cytochrome P450 monooxygenase ausG modifies austinolide to austinol. Austinol can be further modified to dehydroaustinol which forms a diffusible complex with diorcinol that initiates conidiation. Due to genetic rearrangements of the clusters and the subsequent loss of some enzymes, the end products of the Emericella nidulans austinoid biosynthesis clusters are austinol and dehydroaustinol, even if additional enzymes, such as the O-acetyltransferase ausQ and the cytochrome P450 monooxygenase ausR are still functional. In Emericella nidulans (strain FGSC A4 / ATCC 38163 / CBS 112.46 / NRRL 194 / M139) (Aspergillus nidulans), this protein is Short chain dehydrogenase ausX.